Reading from the N-terminus, the 446-residue chain is Nuclear distribution protein nudF (446 aa).

The 33-residue stretch at 9-41 folds into the LisH domain; the sequence is QAEELHKSMVAYLSSIKASQSSNTLREELGIGD. Residues 60–86 are a coiled coil; sequence TGIARLQRKILDLESKITSLQAELDSV. WD repeat units lie at residues 113–154, 156–196, 200–240, 243–282, 285–345, 347–386, 391–430, and 432–446; these read SHRD…RTLK, HMRG…ANIR, GHDH…CVRT, SNSI…PRAA, GHDN…IKTL, GHDN…RLVK, AHGH…PAFQ, and VIAT…RVFK.

It belongs to the WD repeat LIS1/nudF family. In terms of assembly, self-associates. Interacts with nudE and dynein.

It localises to the cytoplasm. The protein localises to the cytoskeleton. The protein resides in the spindle pole. Functionally, positively regulates the activity of the minus-end directed microtubule motor protein dynein. May enhance dynein-mediated microtubule sliding by targeting dynein to the microtubule plus end. Required for nuclear migration during vegetative growth as well as development. Required for retrograde early endosome (EE) transport from the hyphal tip. Required for localization of dynein to the mitotic spindle poles. Recruits additional proteins to the dynein complex at SPBs. This chain is Nuclear distribution protein nudF, found in Aspergillus terreus (strain NIH 2624 / FGSC A1156).